Here is a 406-residue protein sequence, read N- to C-terminus: Tubby-like F-box protein 11 (406 aa).

An F-box domain is found at 53-108 (SCWTQLPPELLREVLARVEESEGWWPRRRDVVACAGVCRSWRGIVREIVRTPEASG).

The protein belongs to the TUB family. As to expression, ubiquitous.

The sequence is that of Tubby-like F-box protein 11 (TULP11) from Oryza sativa subsp. japonica (Rice).